We begin with the raw amino-acid sequence, 255 residues long: Cell division protein DivIB (255 aa).

The Cytoplasmic portion of the chain corresponds to 1–30 (MKNSKVIKLQDRVPKLKNQKKRNKPPVNHR). A helical transmembrane segment spans residues 31–51 (LILYISILFLLVLFLIYFRSP). Topologically, residues 52 to 255 (LSNIKKISVF…FKYLDDEKKK (204 aa)) are extracellular. The POTRA domain occupies 53 to 121 (SNIKKISVFG…NKIDIHIEEY (69 aa)).

The protein belongs to the FtsQ/DivIB family. DivIB subfamily.

The protein resides in the cell membrane. Its function is as follows. Cell division protein that may be involved in stabilizing or promoting the assembly of the division complex. This Bacillus cytotoxicus (strain DSM 22905 / CIP 110041 / 391-98 / NVH 391-98) protein is Cell division protein DivIB.